Consider the following 234-residue polypeptide: Sugar fermentation stimulation protein homolog (234 aa).

Belongs to the SfsA family.

The protein is Sugar fermentation stimulation protein homolog of Photobacterium profundum (strain SS9).